Consider the following 158-residue polypeptide: C-type lectin BfL-2 (158 aa).

Residues 1–21 (MGHFTFIGLCLLAMFLSLSGA) form the signal peptide. Cystine bridges form between Cys-26–Cys-37, Cys-54–Cys-154, Cys-61–Cys-156, and Cys-129–Cys-146. In terms of domain architecture, C-type lectin spans 33–155 (KNGLCYKVFS…CETLHPFICQ (123 aa)). The Mannose-binding signature appears at 119-121 (EPN). Asn-121 carries an N-linked (GlcNAc...) asparagine glycan. Residues Glu-127, Asn-142, and Asp-143 each contribute to the Ca(2+) site.

This sequence belongs to the true venom lectin family. In terms of assembly, homodimer; non-covalently linked. As to expression, expressed by the venom gland.

It is found in the secreted. In terms of biological role, mannose-binding lectin which recognizes specific carbohydrate structures and agglutinates a variety of animal cells by binding to cell-surface glycoproteins and glycolipids. May be a calcium-dependent lectin. This is C-type lectin BfL-2 from Bungarus fasciatus (Banded krait).